The sequence spans 334 residues: GTPase Obg (334 aa).

Residues 1-159 (MRFVDEVVIK…KEVRLELNLL (159 aa)) enclose the Obg domain. Residues 160–331 (ADIALLGLPN…LAKKLNEFLH (172 aa)) form the OBG-type G domain. GTP is bound by residues 166–173 (GLPNAGKS), 191–195 (FTTMY), 212–215 (DIPG), 282–285 (NKID), and 312–314 (SAA). Mg(2+) contacts are provided by serine 173 and threonine 193.

Belongs to the TRAFAC class OBG-HflX-like GTPase superfamily. OBG GTPase family. In terms of assembly, monomer. Requires Mg(2+) as cofactor.

Its subcellular location is the cytoplasm. Functionally, an essential GTPase which binds GTP, GDP and possibly (p)ppGpp with moderate affinity, with high nucleotide exchange rates and a fairly low GTP hydrolysis rate. Plays a role in control of the cell cycle, stress response, ribosome biogenesis and in those bacteria that undergo differentiation, in morphogenesis control. In Francisella philomiragia subsp. philomiragia (strain ATCC 25017 / CCUG 19701 / FSC 153 / O#319-036), this protein is GTPase Obg.